We begin with the raw amino-acid sequence, 176 residues long: NAD(P)H-quinone oxidoreductase subunit I, chloroplastic (176 aa).

2 consecutive 4Fe-4S ferredoxin-type domains span residues 55–84 (GRIHFEFDKCIACEVCVRVCPINLPVVNWE) and 95–124 (QTYSIDFGVCIFCGNCVEYCPTNCLSMTEE). 8 residues coordinate [4Fe-4S] cluster: cysteine 64, cysteine 67, cysteine 70, cysteine 74, cysteine 104, cysteine 107, cysteine 110, and cysteine 114.

Belongs to the complex I 23 kDa subunit family. As to quaternary structure, NDH is composed of at least 16 different subunits, 5 of which are encoded in the nucleus. The cofactor is [4Fe-4S] cluster.

It is found in the plastid. The protein localises to the chloroplast thylakoid membrane. It carries out the reaction a plastoquinone + NADH + (n+1) H(+)(in) = a plastoquinol + NAD(+) + n H(+)(out). The catalysed reaction is a plastoquinone + NADPH + (n+1) H(+)(in) = a plastoquinol + NADP(+) + n H(+)(out). Functionally, NDH shuttles electrons from NAD(P)H:plastoquinone, via FMN and iron-sulfur (Fe-S) centers, to quinones in the photosynthetic chain and possibly in a chloroplast respiratory chain. The immediate electron acceptor for the enzyme in this species is believed to be plastoquinone. Couples the redox reaction to proton translocation, and thus conserves the redox energy in a proton gradient. The protein is NAD(P)H-quinone oxidoreductase subunit I, chloroplastic of Mesostigma viride (Green alga).